The following is a 216-amino-acid chain: Probable GTP-binding protein EngB (216 aa).

An EngB-type G domain is found at 27 to 201; it reads GGVEIAFAGR…AQTLTGWYLA (175 aa). GTP contacts are provided by residues 35–42, 62–66, 80–83, 147–150, and 180–182; these read GRSNAGKS, GRTQL, DLPG, TKAD, and FSS. Residues serine 42 and threonine 64 each coordinate Mg(2+).

Belongs to the TRAFAC class TrmE-Era-EngA-EngB-Septin-like GTPase superfamily. EngB GTPase family. The cofactor is Mg(2+).

Necessary for normal cell division and for the maintenance of normal septation. The protein is Probable GTP-binding protein EngB of Aeromonas hydrophila subsp. hydrophila (strain ATCC 7966 / DSM 30187 / BCRC 13018 / CCUG 14551 / JCM 1027 / KCTC 2358 / NCIMB 9240 / NCTC 8049).